Consider the following 309-residue polypeptide: Mitochondrial brown fat uncoupling protein 1 (309 aa).

The Mitochondrial intermembrane portion of the chain corresponds to 1–10 (MLRAPGSDAP). Residues 11–32 (PTLSVRIAAAAGAACLADMITF) traverse the membrane as a helical segment. 3 Solcar repeats span residues 11–104 (PTLS…VREW), 113–203 (ASLG…MKEA), and 212–297 (DDLP…LKRE). Residues 33–75 (PLDTAKVRLQIQGEGQGQPPRAPRYRGVLGTVATLARTEGLQK) lie on the Mitochondrial matrix side of the membrane. Fatty acid 16:0 is bound at residue R58. A helical transmembrane segment spans residues 76–98 (LYSGLPAGLQRQVGFASLRIGLY). The Mitochondrial intermembrane portion of the chain corresponds to 99–118 (DSVREWLSPGQGAAASLGSR). The chain crosses the membrane as a helical span at residues 119–135 (ISAGVMTGGAAVFIGQP). The Mitochondrial matrix portion of the chain corresponds to 136-180 (TEVVKVRLQAQSHLHGRKPRYTGTYNAYRIIATTEGLTGLWKGTT). The chain crosses the membrane as a helical span at residues 181-197 (PNLMRNVIINCTELVTY). Residues 198-214 (DLMKEALVKNHLLADDL) are Mitochondrial intermembrane-facing. A helical transmembrane segment spans residues 215-234 (PCHFLSALVAGFCTTVLSSP). The Mitochondrial matrix segment spans residues 235-268 (VDVVKTRFVNSVPEQYTSVPNCAMTMLTKEGPLA). C256 is subject to Cysteine sulfenic acid (-SOH). A helical membrane pass occupies residues 269–291 (FFKGFVPSFLRLGSWNVIMFVCF). K271 lines the fatty acid 16:0 pocket. Residues 292-309 (EQLKRELMKSGRTVDCAT) are Mitochondrial intermembrane-facing.

The protein belongs to the mitochondrial carrier (TC 2.A.29) family. In terms of assembly, most probably functions as a monomer. Binds one purine nucleotide per monomer. However, has also been suggested to function as a homodimer or a homotetramer. Tightly associates with cardiolipin in the mitochondrion inner membrane; may stabilize and regulate its activity. Post-translationally, may undergo sulfenylation upon cold exposure. May increase the sensitivity of UCP1 thermogenic function to the activation by noradrenaline probably through structural effects. In terms of processing, may undergo ubiquitin-mediated proteasomal degradation.

The protein localises to the mitochondrion inner membrane. It carries out the reaction H(+)(in) = H(+)(out). With respect to regulation, has no constitutive proton transporter activity and has to be activated by long-chain fatty acids/LCFAs. Inhibited by purine nucleotides. Both purine nucleotides and LCFAs bind the cytosolic side of the transporter and directly compete to activate or inhibit it. Activated by noradrenaline and reactive oxygen species. Despite lacking canonical translational encoding for selenocysteine, a small pool of the protein has been observed to selectively incorporate selenocysteine at 'Cys-256'. Selenocysteine-modified protein is highly sensitive to redox modification and may constitute a pool of protein highly sensitive to activation by elevated levels of reactive oxygen species (ROS). Mitochondrial protein responsible for thermogenic respiration, a specialized capacity of brown adipose tissue and beige fat that participates in non-shivering adaptive thermogenesis to temperature and diet variations and more generally to the regulation of energy balance. Functions as a long-chain fatty acid/LCFA and proton symporter, simultaneously transporting one LCFA and one proton through the inner mitochondrial membrane. However, LCFAs remaining associated with the transporter via their hydrophobic tails, it results in an apparent transport of protons activated by LCFAs. Thereby, dissipates the mitochondrial proton gradient and converts the energy of substrate oxydation into heat instead of ATP. Regulates the production of reactive oxygen species/ROS by mitochondria. In Canis lupus familiaris (Dog), this protein is Mitochondrial brown fat uncoupling protein 1.